Consider the following 412-residue polypeptide: Alpha-1-antiproteinase (412 aa).

The signal sequence occupies residues 1–24 (MPSSISWGLLLLAGLCCLAPGSLA). Ser-33 is modified (phosphoserine). N-linked (GlcNAc...) asparagine glycosylation is found at Asn-65, Asn-102, Asn-165, and Asn-266. The segment at 368-387 (GVTVLEAIPMSLPPDVRFDR) is RCL. Position 378 is a phosphoserine (Ser-378).

The protein belongs to the serpin family. Interacts with CELA2A. Interacts with ERGIC3 and LMAN1/ERGIC53. Interacts with PRSS1/Trypsin. As to expression, plasma.

The protein localises to the secreted. In terms of biological role, inhibitor of serine proteases. The protein is Alpha-1-antiproteinase of Callosciurus caniceps (Gray-bellied squirrel).